The following is a 468-amino-acid chain: Histone acetyltransferase type B catalytic subunit (468 aa).

Ser-8 is subject to Phosphoserine. 2 interaction with histone H4 N-terminus regions span residues Glu-44–Glu-46 and Tyr-208–Phe-210. Acetyl-CoA is bound by residues Phe-248–Ile-250 and Gln-255–Ser-261. Residue Glu-283 is the Proton donor/acceptor of the active site. Residues Ser-442–Ala-468 form a disordered region.

The protein belongs to the HAT1 family. Component of the HAT-B complex composed of at least HAT1 and HAT2. The HAT-B complex binds to histone H4 tail. In the nucleus, interacts with GSK1 and SSB1. In the cytoplasm, interacts with ATG3 and ATG9. Phosphorylated at Ser-8 by GSK1 in the nucleus which impairs its translocation to the cytoplasm through interfering the interaction between HAT1 and SSB1. Dephosphorylation under nutrient starvation conditions promotes the interaction between HAT1 and SSB1 and results in the translocation of HAT1 from the nucleus to the cytoplasm in order to acetylate ATG3 and ATG9.

It is found in the nucleus. It localises to the cytoplasm. The protein resides in the preautophagosomal structure. It carries out the reaction L-lysyl-[protein] + acetyl-CoA = N(6)-acetyl-L-lysyl-[protein] + CoA + H(+). Catalytic component of the histone acetylase B (HAT-B) complex. Has intrinsic substrate specificity that modifies lysine in recognition sequence GXGKXG. Involved in DNA double-strand break repair. Required for appressorium turgor pressure, autophagy and conidial nuclear degradation. During the germination process and upon starvation conditions, translocates from the nucleus to the cytoplasm where it acetylates ATG3 at 'lys-262' and 'Lys-267', thus influencing autophagy through controlling ATG3-ATG8 interaction. Also acetylates ATG9 at 'Lys-621' to regulate ATG9 binding to vesicles, which is also important for autophagy and pathogenicity. This is Histone acetyltransferase type B catalytic subunit from Pyricularia oryzae (strain 70-15 / ATCC MYA-4617 / FGSC 8958) (Rice blast fungus).